The primary structure comprises 327 residues: DNA-directed RNA polymerase subunit alpha (327 aa).

The segment at 1–233 (MVREKVKVST…NLFIPFLHVE (233 aa)) is alpha N-terminal domain (alpha-NTD). The segment at 267-327 (LAFQYIFIDQ…KKILDILEKK (61 aa)) is alpha C-terminal domain (alpha-CTD).

This sequence belongs to the RNA polymerase alpha chain family. In terms of assembly, in plastids the minimal PEP RNA polymerase catalytic core is composed of four subunits: alpha, beta, beta', and beta''. When a (nuclear-encoded) sigma factor is associated with the core the holoenzyme is formed, which can initiate transcription.

It localises to the plastid. Its subcellular location is the chloroplast. The enzyme catalyses RNA(n) + a ribonucleoside 5'-triphosphate = RNA(n+1) + diphosphate. Functionally, DNA-dependent RNA polymerase catalyzes the transcription of DNA into RNA using the four ribonucleoside triphosphates as substrates. The chain is DNA-directed RNA polymerase subunit alpha from Draba nemorosa (Woodland whitlowgrass).